A 123-amino-acid polypeptide reads, in one-letter code: Large ribosomal subunit protein uL14 (123 aa).

It belongs to the universal ribosomal protein uL14 family. As to quaternary structure, part of the 50S ribosomal subunit. Forms a cluster with proteins L3 and L19. In the 70S ribosome, L14 and L19 interact and together make contacts with the 16S rRNA in bridges B5 and B8.

Functionally, binds to 23S rRNA. Forms part of two intersubunit bridges in the 70S ribosome. This Actinobacillus succinogenes (strain ATCC 55618 / DSM 22257 / CCUG 43843 / 130Z) protein is Large ribosomal subunit protein uL14.